We begin with the raw amino-acid sequence, 138 residues long: ATP synthase epsilon chain (138 aa).

Residues 88–119 (DREEARSTLSAAQARLDQSEQSEDKQERYEAQ) form a disordered region. The span at 109–119 (SEDKQERYEAQ) shows a compositional bias: basic and acidic residues.

It belongs to the ATPase epsilon chain family. As to quaternary structure, F-type ATPases have 2 components, CF(1) - the catalytic core - and CF(0) - the membrane proton channel. CF(1) has five subunits: alpha(3), beta(3), gamma(1), delta(1), epsilon(1). CF(0) has three main subunits: a, b and c.

Its subcellular location is the cellular thylakoid membrane. Functionally, produces ATP from ADP in the presence of a proton gradient across the membrane. This Acaryochloris marina (strain MBIC 11017) protein is ATP synthase epsilon chain.